A 507-amino-acid polypeptide reads, in one-letter code: Beta-glucosidase 13 (507 aa).

Residues 1-22 form the signal peptide; sequence MRTKYFSLLVFIIVLASNEVIA. Q50 is an a beta-D-glucoside binding site. An N-linked (GlcNAc...) asparagine glycan is attached at N81. Residues H154 and 199–200 contribute to the a beta-D-glucoside site; that span reads NE. The active-site Proton donor is E200. Residues C219 and C227 are joined by a disulfide bond. N226 carries an N-linked (GlcNAc...) asparagine glycan. Y344 serves as a coordination point for a beta-D-glucoside. N358 carries N-linked (GlcNAc...) asparagine glycosylation. Residues E414, W459, 466-467, and F475 each bind a beta-D-glucoside; that span reads EW. The active-site Nucleophile is E414.

This sequence belongs to the glycosyl hydrolase 1 family.

It carries out the reaction Hydrolysis of terminal, non-reducing beta-D-glucosyl residues with release of beta-D-glucose.. The polypeptide is Beta-glucosidase 13 (Arabidopsis thaliana (Mouse-ear cress)).